The primary structure comprises 1395 residues: DNA-directed RNA polymerase subunit beta' (1395 aa).

The Zn(2+) site is built by Cys-70, Cys-72, Cys-85, and Cys-88. The Mg(2+) site is built by Asp-470, Asp-472, and Asp-474. 4 residues coordinate Zn(2+): Cys-815, Cys-889, Cys-896, and Cys-899.

This sequence belongs to the RNA polymerase beta' chain family. As to quaternary structure, the RNAP catalytic core consists of 2 alpha, 1 beta, 1 beta' and 1 omega subunit. When a sigma factor is associated with the core the holoenzyme is formed, which can initiate transcription. The cofactor is Mg(2+). Requires Zn(2+) as cofactor.

The catalysed reaction is RNA(n) + a ribonucleoside 5'-triphosphate = RNA(n+1) + diphosphate. Functionally, DNA-dependent RNA polymerase catalyzes the transcription of DNA into RNA using the four ribonucleoside triphosphates as substrates. This is DNA-directed RNA polymerase subunit beta' from Anaeromyxobacter sp. (strain Fw109-5).